The sequence spans 1198 residues: Fibronectin type-III domain-containing protein 3A (1198 aa).

A compositionally biased stretch (basic and acidic residues) spans 188–201; sequence KKLKDRQGTQKDKM. A disordered region spans residues 188–257; that stretch reads KKLKDRQGTQ…VDPEMEEKDE (70 aa). Residues serine 203, serine 207, and serine 213 each carry the phosphoserine modification. 9 consecutive Fibronectin type-III domains span residues 268–369, 373–465, 469–562, 566–660, 664–757, 761–851, 863–950, 951–1045, and 1049–1151; these read NIVK…TLSC, PPNA…TSGC, VPAS…TCPD, VPVK…TPAV, PCLP…TAPG, QCRP…TPPS, SDDD…TKPL, PPDP…TPKS, and ALKA…TEPP. Residue lysine 384 is modified to N6-acetyllysine. Residues 1177-1197 form a helical membrane-spanning segment; sequence ILVVFAFFSILIAFIIQYFVI.

This sequence belongs to the FNDC3 family. Testis. Localizes to the acrosome of spermatids, as well as to Leydig cells. Can be detected on the acrosome beginning at steps 2-3 and continuing until step 12 of spermiogenesis.

Its subcellular location is the golgi apparatus membrane. Its function is as follows. Mediates spermatid-Sertoli adhesion during spermatogenesis. The sequence is that of Fibronectin type-III domain-containing protein 3A (Fndc3a) from Mus musculus (Mouse).